A 347-amino-acid polypeptide reads, in one-letter code: MRAVRLVEIGKPLSLQEIGVPKPKGPQVLIKVEAAGVCHSDVHMRQGRFGNLRIVEDLGVKLPVTLGHEIAGKIEEVGDEVVGYSKGDLVAVNPWQGEGNCYYCRIGEEHLCDSPRWLGINFDGAYAEYVIVPHYKYMYKLRRLNAVEAAPLTCSGITTYRAVRKASLDPTKTLLVVGAGGGLGTMAVQIAKAVSGATIIGVDVREEAVEAAKRAGADYVINASMQDPLAEIRRITESKGVDAVIDLNNSEKTLSVYPKALAKQGKYVMVGLFGADLHYHAPLITLSEIQFVGSLVGNQSDFLGIMRLAEAGKVKPMITKTMKLEEANEAIDNLENFKAIGRQVLIP.

Lys11 carries the post-translational modification N6-methyllysine; partial. Cys38, His68, Glu98, Cys101, Cys104, Cys112, and Cys154 together coordinate Zn(2+). Lys213 is modified (N6-methyllysine; partial).

This sequence belongs to the zinc-containing alcohol dehydrogenase family. In terms of assembly, homodimer and homotetramer. Zn(2+) is required as a cofactor.

The enzyme catalyses a primary alcohol + NAD(+) = an aldehyde + NADH + H(+). It carries out the reaction a secondary alcohol + NAD(+) = a ketone + NADH + H(+). The chain is NAD-dependent alcohol dehydrogenase (adh) from Saccharolobus solfataricus (strain ATCC 35092 / DSM 1617 / JCM 11322 / P2) (Sulfolobus solfataricus).